The primary structure comprises 71 residues: Prokaryotic ubiquitin-like protein Pup (71 aa).

Over residues 1 to 18 the composition is skewed to low complexity; the sequence is MATRDSGGQSQTGRSQQG. The segment at 1-42 is disordered; that stretch reads MATRDSGGQSQTGRSQQGEEIEDVTTEASPEVAERHAEITED. The tract at residues 27-65 is ARC ATPase binding; that stretch reads EASPEVAERHAEITEDVDDLLDEIDSVLEENAEEFVRGY. Residues 31–60 adopt a coiled-coil conformation; that stretch reads EVAERHAEITEDVDDLLDEIDSVLEENAEE. An Isoglutamyl lysine isopeptide (Glu-Lys) (interchain with K-? in acceptor proteins) cross-link involves residue Glu71.

Belongs to the prokaryotic ubiquitin-like protein family. Strongly interacts with the proteasome-associated ATPase ARC through a hydrophobic interface; the interacting region of Pup lies in its C-terminal half. There is one Pup binding site per ARC hexamer ring.

The protein operates within protein degradation; proteasomal Pup-dependent pathway. Functionally, protein modifier that is covalently attached to lysine residues of substrate proteins, thereby targeting them for proteasomal degradation. The tagging system is termed pupylation. This is Prokaryotic ubiquitin-like protein Pup from Salinispora arenicola (strain CNS-205).